A 115-amino-acid polypeptide reads, in one-letter code: T cell receptor beta variable 11-1 (115 aa).

The signal sequence occupies residues Met1–Ala21. An Ig-like domain is found at Glu22 to Leu115. The cysteines at positions 42 and 111 are disulfide-linked.

In terms of assembly, alpha-beta TR is a heterodimer composed of an alpha and beta chain; disulfide-linked. The alpha-beta TR is associated with the transmembrane signaling CD3 coreceptor proteins to form the TR-CD3 (TcR or TCR). The assembly of alpha-beta TR heterodimers with CD3 occurs in the endoplasmic reticulum where a single alpha-beta TR heterodimer associates with one CD3D-CD3E heterodimer, one CD3G-CD3E heterodimer and one CD247 homodimer forming a stable octameric structure. CD3D-CD3E and CD3G-CD3E heterodimers preferentially associate with TR alpha and TR beta chains, respectively. The association of the CD247 homodimer is the last step of TcR assembly in the endoplasmic reticulum and is required for transport to the cell surface.

The protein localises to the cell membrane. Its function is as follows. V region of the variable domain of T cell receptor (TR) beta chain that participates in the antigen recognition. Alpha-beta T cell receptors are antigen specific receptors which are essential to the immune response and are present on the cell surface of T lymphocytes. Recognize peptide-major histocompatibility (MH) (pMH) complexes that are displayed by antigen presenting cells (APC), a prerequisite for efficient T cell adaptive immunity against pathogens. Binding of alpha-beta TR to pMH complex initiates TR-CD3 clustering on the cell surface and intracellular activation of LCK that phosphorylates the ITAM motifs of CD3G, CD3D, CD3E and CD247 enabling the recruitment of ZAP70. In turn ZAP70 phosphorylates LAT, which recruits numerous signaling molecules to form the LAT signalosome. The LAT signalosome propagates signal branching to three major signaling pathways, the calcium, the mitogen-activated protein kinase (MAPK) kinase and the nuclear factor NF-kappa-B (NF-kB) pathways, leading to the mobilization of transcription factors that are critical for gene expression and essential for T cell growth and differentiation. The T cell repertoire is generated in the thymus, by V-(D)-J rearrangement. This repertoire is then shaped by intrathymic selection events to generate a peripheral T cell pool of self-MH restricted, non-autoaggressive T cells. Post-thymic interaction of alpha-beta TR with the pMH complexes shapes TR structural and functional avidity. The protein is T cell receptor beta variable 11-1 of Homo sapiens (Human).